A 209-amino-acid polypeptide reads, in one-letter code: Urease accessory protein UreG (209 aa).

11–18 (GPVGSGKT) contacts GTP.

The protein belongs to the SIMIBI class G3E GTPase family. UreG subfamily. In terms of assembly, homodimer. UreD, UreF and UreG form a complex that acts as a GTP-hydrolysis-dependent molecular chaperone, activating the urease apoprotein by helping to assemble the nickel containing metallocenter of UreC. The UreE protein probably delivers the nickel.

It localises to the cytoplasm. In terms of biological role, facilitates the functional incorporation of the urease nickel metallocenter. This process requires GTP hydrolysis, probably effectuated by UreG. In Edwardsiella ictaluri (strain 93-146), this protein is Urease accessory protein UreG.